The primary structure comprises 385 residues: Histidinol-phosphate aminotransferase (385 aa).

The residue at position 230 (Lys-230) is an N6-(pyridoxal phosphate)lysine.

The protein belongs to the class-II pyridoxal-phosphate-dependent aminotransferase family. Pyridoxal 5'-phosphate serves as cofactor.

The enzyme catalyses L-histidinol phosphate + 2-oxoglutarate = 3-(imidazol-4-yl)-2-oxopropyl phosphate + L-glutamate. It functions in the pathway amino-acid biosynthesis; L-histidine biosynthesis; L-histidine from 5-phospho-alpha-D-ribose 1-diphosphate: step 7/9. The polypeptide is Histidinol-phosphate aminotransferase (Saccharomyces cerevisiae (strain ATCC 204508 / S288c) (Baker's yeast)).